A 62-amino-acid chain; its full sequence is MTLAYYGQPVKMCHILPPLRSLPVLVGKKKLKKKKSQTTNNHVIFLFTLFIKLLKTHNRMSL.

This is an uncharacterized protein from Saccharomyces cerevisiae (strain ATCC 204508 / S288c) (Baker's yeast).